Consider the following 745-residue polypeptide: Myeloperoxidase (745 aa).

The signal sequence occupies residues 1–48 (MGVPFFSSLRCMVDLGPCWAGGLTAEMKLLLALAGLLAILATPQPSEG). Asn139 is a glycosylation site (N-linked (GlcNAc...) asparagine). A disulfide bridge connects residues Cys167 and Cys180. A heme b-binding site is contributed by Asp260. Catalysis depends on His261, which acts as the Proton acceptor. Asp262 contributes to the Ca(2+) binding site. 2 cysteine pairs are disulfide-bonded: Cys281-Cys291 and Cys285-Cys309. A Cysteine sulfenic acid (-SOH) modification is found at Cys316. A glycan (N-linked (GlcNAc...) asparagine) is linked at Asn323. Residues Thr334, Phe336, Asp338, and Ser340 each contribute to the Ca(2+) site. N-linked (GlcNAc...) asparagine glycosylation is found at Asn355 and Asn391. Cys387 and Cys398 form a disulfide bridge. Glu408 and Met409 together coordinate heme b. An N-linked (GlcNAc...) asparagine glycan is attached at Asn483. Heme b is bound at residue His502. Intrachain disulfides connect Cys606/Cys663 and Cys704/Cys730. An N-linked (GlcNAc...) asparagine glycan is attached at Asn729.

Belongs to the peroxidase family. XPO subfamily. As to quaternary structure, homodimer; disulfide-linked. Each monomer consists of a light and a heavy chain. Found in a complex with CP and LTF; interacts directly with CP, which protects CP antioxidant properties by MPO. It depends on Ca(2+) as a cofactor. Heme b is required as a cofactor.

It localises to the lysosome. It catalyses the reaction chloride + H2O2 + H(+) = hypochlorous acid + H2O. In terms of biological role, part of the host defense system of polymorphonuclear leukocytes. It is responsible for microbicidal activity against a wide range of organisms. In the stimulated PMN, MPO catalyzes the production of hypohalous acids, primarily hypochlorous acid in physiologic situations, and other toxic intermediates that greatly enhance PMN microbicidal activity. Mediates the proteolytic cleavage of alpha-1-microglobulin to form t-alpha-1-microglobulin, which potently inhibits oxidation of low-density lipoprotein particles and limits vascular damage. The chain is Myeloperoxidase from Homo sapiens (Human).